The primary structure comprises 557 residues: Potassium-transporting ATPase potassium-binding subunit (557 aa).

Transmembrane regions (helical) follow at residues 5 to 25 (GFLLIATFLLVLMVLARPLGS), 63 to 83 (LCAILGLNMLGLAVLFFMLLG), 132 to 152 (GLTVQNFLSAASGIAVIFAFI), 170 to 190 (LLRITLWVLVPVALLIALFLI), 253 to 273 (FVQMLAIFLIPTALCFAFGEV), 283 to 303 (LLWAMSVIFVICVGVVMWAEV), 329 to 349 (VLVSSLFAVVTTAASCGAVIA), 356 to 376 (ALGGMVPMWLMQIGEVVFGGV), 379 to 399 (GLYGMMLFVLLAVFIAGLMIG), 416 to 436 (LTALAILVTPTLVLMGAALAM), 484 to 504 (LLAFCMFVGRFGVIIPVMAIA), and 526 to 546 (LFVGLLIGTVLLVGALTFIPA).

This sequence belongs to the KdpA family. As to quaternary structure, the system is composed of three essential subunits: KdpA, KdpB and KdpC.

Its subcellular location is the cell inner membrane. Functionally, part of the high-affinity ATP-driven potassium transport (or Kdp) system, which catalyzes the hydrolysis of ATP coupled with the electrogenic transport of potassium into the cytoplasm. This subunit binds the periplasmic potassium ions and delivers the ions to the membrane domain of KdpB through an intramembrane tunnel. The protein is Potassium-transporting ATPase potassium-binding subunit of Shigella boydii serotype 18 (strain CDC 3083-94 / BS512).